The following is a 181-amino-acid chain: Shikimate kinase (181 aa).

Position 17–22 (17–22 (GAGKTT)) interacts with ATP. Thr-21 provides a ligand contact to Mg(2+). Substrate is bound by residues Asp-39, Arg-63, and Gly-85. Residue Arg-122 participates in ATP binding. Residue Arg-141 coordinates substrate.

Belongs to the shikimate kinase family. As to quaternary structure, monomer. Mg(2+) serves as cofactor.

It is found in the cytoplasm. It catalyses the reaction shikimate + ATP = 3-phosphoshikimate + ADP + H(+). The protein operates within metabolic intermediate biosynthesis; chorismate biosynthesis; chorismate from D-erythrose 4-phosphate and phosphoenolpyruvate: step 5/7. In terms of biological role, catalyzes the specific phosphorylation of the 3-hydroxyl group of shikimic acid using ATP as a cosubstrate. The sequence is that of Shikimate kinase from Trichormus variabilis (strain ATCC 29413 / PCC 7937) (Anabaena variabilis).